A 983-amino-acid polypeptide reads, in one-letter code: Inner tegument protein (983 aa).

The tract at residues 474-983 is interaction with large tegument protein; it reads LNVNTHFAVQ…TSVSLPPASP (510 aa). The segment at 902–932 is disordered; it reads PWESAPQPPRLRMTPDTDHEESTAGATSVPE. Basic and acidic residues predominate over residues 914-923; the sequence is MTPDTDHEES.

It belongs to the herpesviridae inner tegument protein family. Interacts (via C-terminus) with the large tegument protein/LTP (via N-terminus).

It localises to the virion tegument. The protein localises to the host cytoplasm. Its subcellular location is the host nucleus. The protein resides in the host Golgi apparatus. It is found in the host trans-Golgi network. Functionally, plays an essential role in cytoplasmic secondary envelopment during viral egress. Interacts with the capsid via the large tegument protein/LTP and participates in its transport to the host trans-Golgi network (TGN) where secondary envelopment occurs. Modulates tegumentation and capsid accumulation at the viral assembly complex. The sequence is that of Inner tegument protein (UL47) from Homo sapiens (Human).